The chain runs to 417 residues: Serine hydroxymethyltransferase (417 aa).

Residues Leu121 and 125 to 127 each bind (6S)-5,6,7,8-tetrahydrofolate; that span reads GHL. N6-(pyridoxal phosphate)lysine is present on Lys229. Residue 355-357 participates in (6S)-5,6,7,8-tetrahydrofolate binding; the sequence is SPF.

Belongs to the SHMT family. In terms of assembly, homodimer. The cofactor is pyridoxal 5'-phosphate.

Its subcellular location is the cytoplasm. It carries out the reaction (6R)-5,10-methylene-5,6,7,8-tetrahydrofolate + glycine + H2O = (6S)-5,6,7,8-tetrahydrofolate + L-serine. It functions in the pathway one-carbon metabolism; tetrahydrofolate interconversion. Its pathway is amino-acid biosynthesis; glycine biosynthesis; glycine from L-serine: step 1/1. In terms of biological role, catalyzes the reversible interconversion of serine and glycine with tetrahydrofolate (THF) serving as the one-carbon carrier. This reaction serves as the major source of one-carbon groups required for the biosynthesis of purines, thymidylate, methionine, and other important biomolecules. Also exhibits THF-independent aldolase activity toward beta-hydroxyamino acids, producing glycine and aldehydes, via a retro-aldol mechanism. The protein is Serine hydroxymethyltransferase of Serratia proteamaculans (strain 568).